Here is a 313-residue protein sequence, read N- to C-terminus: Lactamase-like protein nscB (313 aa).

Zn(2+) contacts are provided by histidine 97, histidine 99, aspartate 101, and histidine 102. Aspartate 101 acts as the Proton donor/acceptor in catalysis.

Belongs to the metallo-beta-lactamase superfamily. Zn(2+) is required as a cofactor.

It functions in the pathway secondary metabolite biosynthesis. Its function is as follows. Lactamase-like protein; part of the gene cluster that mediates the biosynthesis of neosartoricin B, a prenylated anthracenone that probably exhibits T-cell antiproliferative activity, suggestive of a physiological role as an immunosuppressive agent. The non-reducing polyketide synthase nscA probably synthesizes and cyclizes the decaketide backbone. The hydrolase nscB then mediates the product release through hydrolysis followed by spontaneous decarboxylation. The prenyltransferase nscD catalyzes the addition of the dimethylallyl group to the aromatic C5. The FAD-dependent monooxygenase nscC is then responsible for the stereospecific hydroxylation at C2. Neosartoricin B can be converted into two additional compounds neosartoricins C and D. Neosartoricin C is a spirocyclic compound that is cyclized through the attack of C3 hydroxyl on C14, followed by dehydration. On the other hand, neosartoricin D is a further cyclized compound in which attack of C2 on C14 in neosartoricin C results in the formation of the acetal-containing dioxabicyclo-octanone ring. Both of these compounds are novel and possibly represent related metabolites of the gene cluster. The protein is Lactamase-like protein nscB of Arthroderma gypseum (strain ATCC MYA-4604 / CBS 118893) (Microsporum gypseum).